The chain runs to 81 residues: MDPMIAQGALIGGGLIMAGGAIGAGIGDGMAGNALVSGIARQPEAQSRLFTPFFITVGLVEAAYFINLAFMALFVFATPVK.

The next 2 membrane-spanning stretches (helical) occupy residues 4 to 24 (MIAQ…AIGA) and 57 to 77 (VGLV…FVFA).

This sequence belongs to the ATPase C chain family. F-type ATPases have 2 components, F(1) - the catalytic core - and F(0) - the membrane proton channel. F(1) has five subunits: alpha(3), beta(3), gamma(1), delta(1), epsilon(1). F(0) has three main subunits: a(1), b(2) and c(10-14). The alpha and beta chains form an alternating ring which encloses part of the gamma chain. F(1) is attached to F(0) by a central stalk formed by the gamma and epsilon chains, while a peripheral stalk is formed by the delta and b chains.

It localises to the cell membrane. Its function is as follows. F(1)F(0) ATP synthase produces ATP from ADP in the presence of a proton or sodium gradient. F-type ATPases consist of two structural domains, F(1) containing the extramembraneous catalytic core and F(0) containing the membrane proton channel, linked together by a central stalk and a peripheral stalk. During catalysis, ATP synthesis in the catalytic domain of F(1) is coupled via a rotary mechanism of the central stalk subunits to proton translocation. In terms of biological role, key component of the F(0) channel; it plays a direct role in translocation across the membrane. A homomeric c-ring of between 10-14 subunits forms the central stalk rotor element with the F(1) delta and epsilon subunits. The chain is ATP synthase subunit c from Mycobacterium leprae (strain TN).